We begin with the raw amino-acid sequence, 428 residues long: 3-phosphoshikimate 1-carboxyvinyltransferase (428 aa).

The 3-phosphoshikimate site is built by lysine 19, serine 20, and arginine 24. Lysine 19 is a binding site for phosphoenolpyruvate. Positions 91 and 119 each coordinate phosphoenolpyruvate. Residues serine 164, glutamine 166, aspartate 312, and lysine 339 each coordinate 3-phosphoshikimate. Residue glutamine 166 coordinates phosphoenolpyruvate. Aspartate 312 functions as the Proton acceptor in the catalytic mechanism. Phosphoenolpyruvate-binding residues include arginine 343 and arginine 386.

It belongs to the EPSP synthase family. In terms of assembly, monomer.

The protein localises to the cytoplasm. The catalysed reaction is 3-phosphoshikimate + phosphoenolpyruvate = 5-O-(1-carboxyvinyl)-3-phosphoshikimate + phosphate. The protein operates within metabolic intermediate biosynthesis; chorismate biosynthesis; chorismate from D-erythrose 4-phosphate and phosphoenolpyruvate: step 6/7. Its function is as follows. Catalyzes the transfer of the enolpyruvyl moiety of phosphoenolpyruvate (PEP) to the 5-hydroxyl of shikimate-3-phosphate (S3P) to produce enolpyruvyl shikimate-3-phosphate and inorganic phosphate. The sequence is that of 3-phosphoshikimate 1-carboxyvinyltransferase from Bacillus velezensis (strain DSM 23117 / BGSC 10A6 / LMG 26770 / FZB42) (Bacillus amyloliquefaciens subsp. plantarum).